The following is a 181-amino-acid chain: Der GTPase-activating protein YihI (181 aa).

Disordered regions lie at residues 1–75 and 145–181; these read MSRK…KKIP and EPEAEEEFEEEAPVRKSRSDDDLLADFEDFDMDDYKG. Residues 32 to 43 are compositionally biased toward basic residues; the sequence is RLRKKDKKRKGL. Residues 146–155 show a composition bias toward acidic residues; the sequence is PEAEEEFEEE. The span at 156 to 165 shows a compositional bias: basic and acidic residues; it reads APVRKSRSDD. Acidic residues predominate over residues 166–181; it reads DLLADFEDFDMDDYKG.

This sequence belongs to the YihI family. In terms of assembly, interacts with Der.

In terms of biological role, a GTPase-activating protein (GAP) that modifies Der/EngA GTPase function. May play a role in ribosome biogenesis. The polypeptide is Der GTPase-activating protein YihI (Vibrio vulnificus (strain CMCP6)).